Consider the following 66-residue polypeptide: Large ribosomal subunit protein bL28 (66 aa).

Residues 1–26 (MAKDAITGARTRFGNQRSHALNSSRR) are disordered. The span at 13–25 (FGNQRSHALNSSR) shows a compositional bias: polar residues.

Belongs to the bacterial ribosomal protein bL28 family.

The chain is Large ribosomal subunit protein bL28 from Leuconostoc citreum (strain KM20).